Consider the following 316-residue polypeptide: Olfactory receptor class A-like protein 1 (316 aa).

The Extracellular segment spans residues 1-8; that stretch reads MDLCVTIK. A helical membrane pass occupies residues 9–29; that stretch reads GVSFLLQAGLGILANALVLLA. At 30–39 the chain is on the cytoplasmic side; sequence YAHIRLAEAR. A helical membrane pass occupies residues 40–60; the sequence is LQPVDAILCHLALVDLLLLLT. The Extracellular portion of the chain corresponds to 61 to 97; it reads RGVPQTMTVFGMRNLLDDTGCKVVIYTYRIARALSVC. A disulfide bond links cysteine 81 and cysteine 169. Residues 98 to 118 traverse the membrane as a helical segment; that stretch reads ITCMLSVFQAVTVAPAAGPLL. Residues 119–132 are Cytoplasmic-facing; that stretch reads SGVKARLPQLLAPT. Residues 133–153 form a helical membrane-spanning segment; sequence FAALWFINMAVCIAAPFFSVA. At 154-187 the chain is on the extracellular side; it reads PRNGTVPPFTLNLGFCHVDFHDNLSYVLNGVAVS. 2 N-linked (GlcNAc...) asparagine glycosylation sites follow: asparagine 156 and asparagine 176. The helical transmembrane segment at 188-208 threads the bilayer; that stretch reads VRDFAFVGAMLASSGFILLLL. The Cytoplasmic segment spans residues 209 to 233; that stretch reads HRHRRQVRAVRRSQGSTMETRAART. Residues 234-254 traverse the membrane as a helical segment; the sequence is VLMLVILYSVFFGIDNVIWIY. Residues 255 to 264 are Extracellular-facing; that stretch reads MLTVAQVPPV. Residues 265–285 traverse the membrane as a helical segment; the sequence is VADMRVFFSSCYASLSPFLII. The Cytoplasmic segment spans residues 286-316; the sequence is SSNRKLKARMVCATSEQERQAEDGKNSSGKN.

Belongs to the G-protein coupled receptor 1 family. As to expression, highly expressed in the olfactory rosette where it localizes to a subset of olfactory sensory neurons, mainly in the apical region of the neuroepithelium. Not detected in other tissues tested.

The protein localises to the cell membrane. Its function is as follows. Probable pheromone receptor. Shows high specificity for 4-hydroxyphenylacetic acid. Activation of the receptor stimulates intracellular calcium release. The sequence is that of Olfactory receptor class A-like protein 1 from Danio rerio (Zebrafish).